A 651-amino-acid polypeptide reads, in one-letter code: Intraflagellar transport protein 70A (651 aa).

7 TPR repeats span residues 8–41, 42–75, 140–173, 175–207, 379–410, 411–443, and 445–478; these read DGEY…HTKS, RAAL…HPEV, PDYD…LGYQ, DLAY…GIRE, VTKQ…EKYI, PVLM…CNEH, and TWKL…HYEN. Residues 494-521 adopt a coiled-coil conformation; the sequence is YIMTSQNEEAEELMRKIEKEEEQISYDD. One copy of the TPR 8 repeat lies at 530–563; that stretch reads CIVNLVIGTLYCAKGNYDFGISRVIKSLEPYNKK.

This sequence belongs to the TTC30/dfy-1/fleer family. Localizes to the cilia of many ciliated epithelial cell types including pronephric cells, olfactory placode, the brain ventricle and lateral line organs.

Its subcellular location is the cell projection. The protein localises to the cilium. Plays a role in anterograde intraflagellar transport (IFT), the process by which cilia precursors are transported from the base of the cilium to the site of their incorporation at the tip. Required for polyglutamylation of axonemal tubulin, which is a prerequisite for correct assembly of cilia and for normal cilia beat amplitude. Does not seem to be required for neuronal microtubule polyglutamylation. This is Intraflagellar transport protein 70A (ift70a) from Danio rerio (Zebrafish).